A 904-amino-acid polypeptide reads, in one-letter code: Nitrate reductase [NADH] 1 (904 aa).

Polar residues-rich tracts occupy residues 1 to 10 (MAASVENRQF) and 39 to 50 (STNFQKKPNSTI). The tract at residues 1-65 (MAASVENRQF…SSEDDDDDDE (65 aa)) is disordered. A compositionally biased stretch (acidic residues) spans 56–65 (SSEDDDDDDE). Cys183 serves as a coordination point for Mo-molybdopterin. The 76-residue stretch at 531–606 (SKMYSMSEVR…LEEFRIGELL (76 aa)) folds into the Cytochrome b5 heme-binding domain. Heme-binding residues include His566 and His589. The region spanning 647-759 (REKIPCKLID…KGPLGHIEYQ (113 aa)) is the FAD-binding FR-type domain. FAD contacts are provided by residues 699 to 702 (RAYT), 716 to 720 (VVKIY), Phe721, Phe728, 733 to 735 (QMS), and Thr786.

The protein belongs to the nitrate reductase family. In terms of assembly, homodimer. It depends on FAD as a cofactor. Heme is required as a cofactor. The cofactor is Mo-molybdopterin.

It carries out the reaction nitrite + NAD(+) + H2O = nitrate + NADH + H(+). Regulated by the nitrogen source and controlled by the circadian rhythm. Functionally, nitrate reductase is a key enzyme involved in the first step of nitrate assimilation in plants, fungi and bacteria. The polypeptide is Nitrate reductase [NADH] 1 (NIA1) (Nicotiana tabacum (Common tobacco)).